Consider the following 431-residue polypeptide: GTPase Obg (431 aa).

The Obg domain occupies 1-158; it reads MFVDQVKINV…REIRLELKVL (158 aa). Positions 125 to 145 are disordered; sequence GNIHFASPKNPAPEIAENGEP. The 177-residue stretch at 159-335 folds into the OBG-type G domain; it reads ADVGLVGFPS…LLQRTADMLA (177 aa). GTP-binding positions include 165-172, 190-194, 212-215, 282-285, and 316-318; these read GFPSVGKS, FTTLV, DLPG, NKMD, and SAL. Positions 172 and 192 each coordinate Mg(2+). The OCT domain maps to 353 to 431; sequence YNFQPEAEFT…IDDFTFEYMA (79 aa).

Belongs to the TRAFAC class OBG-HflX-like GTPase superfamily. OBG GTPase family. In terms of assembly, monomer. The cofactor is Mg(2+).

It is found in the cytoplasm. In terms of biological role, an essential GTPase which binds GTP, GDP and possibly (p)ppGpp with moderate affinity, with high nucleotide exchange rates and a fairly low GTP hydrolysis rate. Plays a role in control of the cell cycle, stress response, ribosome biogenesis and in those bacteria that undergo differentiation, in morphogenesis control. The polypeptide is GTPase Obg (Levilactobacillus brevis (strain ATCC 367 / BCRC 12310 / CIP 105137 / JCM 1170 / LMG 11437 / NCIMB 947 / NCTC 947) (Lactobacillus brevis)).